The chain runs to 424 residues: CinA-like protein (424 aa).

It belongs to the CinA family.

The sequence is that of CinA-like protein from Shewanella baltica (strain OS195).